The chain runs to 117 residues: MRLPQDIIIKPYITEKSNMEIGAGKYTFIVDVKSTKTEIKKAVEALFSVKVLQVNTMNFEGKVKRTGVHEGPRPAWKKAVVKIDTDPKPVEYLAKGGKTVTNNKKYKTSIEEFGVAQ.

It belongs to the universal ribosomal protein uL23 family. In terms of assembly, part of the 50S ribosomal subunit. Contacts protein L29, and trigger factor when it is bound to the ribosome.

In terms of biological role, one of the early assembly proteins it binds 23S rRNA. One of the proteins that surrounds the polypeptide exit tunnel on the outside of the ribosome. Forms the main docking site for trigger factor binding to the ribosome. The sequence is that of Large ribosomal subunit protein uL23 from Ruminiclostridium cellulolyticum (strain ATCC 35319 / DSM 5812 / JCM 6584 / H10) (Clostridium cellulolyticum).